Reading from the N-terminus, the 426-residue chain is Glutamate-1-semialdehyde 2,1-aminomutase (426 aa).

Position 265 is an N6-(pyridoxal phosphate)lysine (lysine 265).

The protein belongs to the class-III pyridoxal-phosphate-dependent aminotransferase family. HemL subfamily. Homodimer. Requires pyridoxal 5'-phosphate as cofactor.

Its subcellular location is the cytoplasm. The enzyme catalyses (S)-4-amino-5-oxopentanoate = 5-aminolevulinate. Its pathway is porphyrin-containing compound metabolism; protoporphyrin-IX biosynthesis; 5-aminolevulinate from L-glutamyl-tRNA(Glu): step 2/2. This chain is Glutamate-1-semialdehyde 2,1-aminomutase, found in Salmonella heidelberg (strain SL476).